A 286-amino-acid chain; its full sequence is MAAITAQMVKELREMTGAGMMDCKKALVEVEGDLEKAVDWLRQKGMAKAAKKSGRATSEGLVTVALSDDGKTVAMASLLCETDFVARGDQFQDMAAKVAKSVLDNAPADAAALEALMGEEVTQLIASVGENMQLGRFARHVKPCESSLVGQYIHANGKIGVLVFLTCGKAESVDKPEVQELAKNIAMQVAAASPMALDAASLDQAAVEREREVYRQKALEEGKPANIVDKIADGAVKKFQKEVCLMEQPYIRDDKKTITDVVRETGKAVGDEITVTGFERIQLAAE.

The segment at 82 to 85 is involved in Mg(2+) ion dislocation from EF-Tu; that stretch reads TDFV.

Belongs to the EF-Ts family.

It localises to the cytoplasm. Associates with the EF-Tu.GDP complex and induces the exchange of GDP to GTP. It remains bound to the aminoacyl-tRNA.EF-Tu.GTP complex up to the GTP hydrolysis stage on the ribosome. In Desulfovibrio desulfuricans (strain ATCC 27774 / DSM 6949 / MB), this protein is Elongation factor Ts.